The chain runs to 216 residues: N-(5'-phosphoribosyl)anthranilate isomerase (216 aa).

The protein belongs to the TrpF family.

It carries out the reaction N-(5-phospho-beta-D-ribosyl)anthranilate = 1-(2-carboxyphenylamino)-1-deoxy-D-ribulose 5-phosphate. Its pathway is amino-acid biosynthesis; L-tryptophan biosynthesis; L-tryptophan from chorismate: step 3/5. In Methanopyrus kandleri (strain AV19 / DSM 6324 / JCM 9639 / NBRC 100938), this protein is N-(5'-phosphoribosyl)anthranilate isomerase.